A 260-amino-acid chain; its full sequence is UPF0246 protein Bmul_1054/BMULJ_02209 (260 aa).

Belongs to the UPF0246 family.

The chain is UPF0246 protein Bmul_1054/BMULJ_02209 from Burkholderia multivorans (strain ATCC 17616 / 249).